We begin with the raw amino-acid sequence, 220 residues long: V-set and transmembrane domain-containing protein 2-like protein (220 aa).

A signal peptide spans 1–24; it reads MGAPLAAALGALHYLALFLQLGGA. The Ig-like domain occupies 41 to 158; that stretch reads ALFTETPHDM…DGGRGVPRVL (118 aa). A disulfide bridge connects residues C62 and C142. Pro residues predominate over residues 165 to 180; that stretch reads PAPPRAPRPRGQPPGE. The disordered stretch occupies residues 165–220; the sequence is PAPPRAPRPRGQPPGEEPGRGPTLLFLIILPGTGSGTPREAEPHQPHAGGCPARQS.

This is V-set and transmembrane domain-containing protein 2-like protein (Vstm2l) from Mus musculus (Mouse).